Here is a 1226-residue protein sequence, read N- to C-terminus: Double-stranded RNA-specific adenosine deaminase (1226 aa).

Residue arginine 26 is modified to Asymmetric dimethylarginine. The Z-binding 1 domain maps to 133–199 (LSIYQDQEQR…GTPPLWKIAV (67 aa)). Residues 133 to 202 (LSIYQDQEQR…PLWKIAVSTQ (70 aa)) are interaction with Z-DNA. Disordered regions lie at residues 208–238 (SGVV…TSVS) and 258–286 (GVVR…STSA). The residue at position 285 (serine 285) is a Phosphoserine. The 65-residue stretch at 293 to 357 (FLDMAEIKEK…TTPPIWHLTD (65 aa)) folds into the Z-binding 2 domain. Glycyl lysine isopeptide (Lys-Gly) (interchain with G-Cter in SUMO2) cross-links involve residues lysine 384 and lysine 408. Lysine 418 participates in a covalent cross-link: Glycyl lysine isopeptide (Lys-Gly) (interchain with G-Cter in SUMO); alternate. Residue lysine 418 forms a Glycyl lysine isopeptide (Lys-Gly) (interchain with G-Cter in SUMO1); alternate linkage. Residue lysine 418 forms a Glycyl lysine isopeptide (Lys-Gly) (interchain with G-Cter in SUMO2); alternate linkage. The residue at position 481 (serine 481) is a Phosphoserine. The 69-residue stretch at 503-571 (NPISGLLEYA…AMKAMTILLE (69 aa)) folds into the DRBM 1 domain. Residues 574–597 (KAKDSGKSEESSHYSTEKESEKTA) show a composition bias toward basic and acidic residues. Residues 574–610 (KAKDSGKSEESSHYSTEKESEKTAESQTPTPSATSFF) are disordered. Residue lysine 580 forms a Glycyl lysine isopeptide (Lys-Gly) (interchain with G-Cter in SUMO2) linkage. Residues 600-610 (QTPTPSATSFF) are compositionally biased toward polar residues. A phosphothreonine mark is found at threonine 601 and threonine 603. Residues serine 614, serine 629, and serine 636 each carry the phosphoserine modification. Residues 614 to 682 (SPVTTLLECM…AEEAMKALHG (69 aa)) form the DRBM 2 domain. Residues 716 to 725 (IGELVRYLNT) are N-terminal extension of DRBM 3 and constituent of a bi-partite nuclear localization signal. The region spanning 726–794 (NPVGGLLEYA…ADAALRVLIG (69 aa)) is the DRBM 3 domain. The tract at residues 795 to 801 (ENEKAER) is C-terminal extension of DRBM 3 and constituent of a bi-partite nuclear localization signal. A Phosphothreonine modification is found at threonine 808. Serine 814, serine 823, and serine 825 each carry phosphoserine. Residue lysine 875 forms a Glycyl lysine isopeptide (Lys-Gly) (interchain with G-Cter in SUMO2) linkage. Residues 886 to 1221 (SLGTGNRCVK…ISKPQEEKNF (336 aa)) enclose the A to I editase domain. Histidine 910 contributes to the Zn(2+) binding site. Residue glutamate 912 is the Proton donor of the active site. Zn(2+) is bound by residues cysteine 966 and cysteine 1036.

Homodimer. Homodimerization is essential for its catalytic activity. Isoform 5 can form heterodimers with ADARB1/ADAR2. Isoform 1 interacts with ILF2/NF45 and ILF3/NF90. Binding to ILF3/NF90 up-regulates ILF3-mediated gene expression. Isoform 1 and isoform 5 (via DRBM 3 domain) interact with TNPO1. Isoform 5 (via DRBM domains) interacts with XPO5. Isoform 1 and isoform 5 can interact with EIF2AK2/PKR and UPF1. In terms of processing, sumoylation reduces RNA-editing activity. Ubiquitously expressed, highest levels were found in brain and lung. Isoform 5 is expressed at higher levels in astrocytomas as compared to normal brain tissue and expression increases strikingly with the severity of the tumor, being higher in the most aggressive tumors.

The protein resides in the cytoplasm. Its subcellular location is the nucleus. The protein localises to the nucleolus. The enzyme catalyses adenosine in double-stranded RNA + H2O + H(+) = inosine in double-stranded RNA + NH4(+). Functionally, catalyzes the hydrolytic deamination of adenosine to inosine in double-stranded RNA (dsRNA) referred to as A-to-I RNA editing. This may affect gene expression and function in a number of ways that include mRNA translation by changing codons and hence the amino acid sequence of proteins since the translational machinery read the inosine as a guanosine; pre-mRNA splicing by altering splice site recognition sequences; RNA stability by changing sequences involved in nuclease recognition; genetic stability in the case of RNA virus genomes by changing sequences during viral RNA replication; and RNA structure-dependent activities such as microRNA production or targeting or protein-RNA interactions. Can edit both viral and cellular RNAs and can edit RNAs at multiple sites (hyper-editing) or at specific sites (site-specific editing). Its cellular RNA substrates include: bladder cancer-associated protein (BLCAP), neurotransmitter receptors for glutamate (GRIA2) and serotonin (HTR2C) and GABA receptor (GABRA3). Site-specific RNA editing of transcripts encoding these proteins results in amino acid substitutions which consequently alters their functional activities. Exhibits low-level editing at the GRIA2 Q/R site, but edits efficiently at the R/G site and HOTSPOT1. Its viral RNA substrates include: hepatitis C virus (HCV), vesicular stomatitis virus (VSV), measles virus (MV), hepatitis delta virus (HDV), and human immunodeficiency virus type 1 (HIV-1). Exhibits either a proviral (HDV, MV, VSV and HIV-1) or an antiviral effect (HCV) and this can be editing-dependent (HDV and HCV), editing-independent (VSV and MV) or both (HIV-1). Impairs HCV replication via RNA editing at multiple sites. Enhances the replication of MV, VSV and HIV-1 through an editing-independent mechanism via suppression of EIF2AK2/PKR activation and function. Stimulates both the release and infectivity of HIV-1 viral particles by an editing-dependent mechanism where it associates with viral RNAs and edits adenosines in the 5'UTR and the Rev and Tat coding sequence. Can enhance viral replication of HDV via A-to-I editing at a site designated as amber/W, thereby changing an UAG amber stop codon to an UIG tryptophan (W) codon that permits synthesis of the large delta antigen (L-HDAg) which has a key role in the assembly of viral particles. However, high levels of ADAR1 inhibit HDV replication. This is Double-stranded RNA-specific adenosine deaminase (ADAR) from Homo sapiens (Human).